Reading from the N-terminus, the 146-residue chain is D-aminoacyl-tRNA deacylase (146 aa).

Positions 137–138 match the Gly-cisPro motif, important for rejection of L-amino acids motif; the sequence is GP.

Belongs to the DTD family. In terms of assembly, homodimer.

It localises to the cytoplasm. It carries out the reaction glycyl-tRNA(Ala) + H2O = tRNA(Ala) + glycine + H(+). The enzyme catalyses a D-aminoacyl-tRNA + H2O = a tRNA + a D-alpha-amino acid + H(+). An aminoacyl-tRNA editing enzyme that deacylates mischarged D-aminoacyl-tRNAs. Also deacylates mischarged glycyl-tRNA(Ala), protecting cells against glycine mischarging by AlaRS. Acts via tRNA-based rather than protein-based catalysis; rejects L-amino acids rather than detecting D-amino acids in the active site. By recycling D-aminoacyl-tRNA to D-amino acids and free tRNA molecules, this enzyme counteracts the toxicity associated with the formation of D-aminoacyl-tRNA entities in vivo and helps enforce protein L-homochirality. This is D-aminoacyl-tRNA deacylase from Bacillus cereus (strain G9842).